Consider the following 277-residue polypeptide: Undecaprenyl-diphosphatase (277 aa).

Transmembrane regions (helical) follow at residues 1-21 (MTWI…FLPI), 41-61 (GAAF…IYFW), 90-110 (WLII…EDWI), 114-134 (FRSL…LALA), 191-211 (AFLL…YTSL), 224-244 (ETLV…AWLM), and 255-275 (FVWY…AGVI).

The protein belongs to the UppP family.

It is found in the cell membrane. The catalysed reaction is di-trans,octa-cis-undecaprenyl diphosphate + H2O = di-trans,octa-cis-undecaprenyl phosphate + phosphate + H(+). In terms of biological role, catalyzes the dephosphorylation of undecaprenyl diphosphate (UPP). Confers resistance to bacitracin. This chain is Undecaprenyl-diphosphatase, found in Micrococcus luteus (strain ATCC 4698 / DSM 20030 / JCM 1464 / CCM 169 / CCUG 5858 / IAM 1056 / NBRC 3333 / NCIMB 9278 / NCTC 2665 / VKM Ac-2230) (Micrococcus lysodeikticus).